A 432-amino-acid polypeptide reads, in one-letter code: Adenylosuccinate synthetase (432 aa).

Residues 13–19 (GDEGKGK) and 41–43 (GHT) each bind GTP. The active-site Proton acceptor is aspartate 14. Aspartate 14 and glycine 41 together coordinate Mg(2+). Residues 14 to 17 (DEGK), 39 to 42 (NAGH), threonine 130, arginine 144, glutamine 225, threonine 240, and arginine 304 contribute to the IMP site. Catalysis depends on histidine 42, which acts as the Proton donor. 300–306 (ATTGRRR) is a substrate binding site. GTP contacts are provided by residues arginine 306, 332-334 (KLD), and 415-417 (STG).

Belongs to the adenylosuccinate synthetase family. In terms of assembly, homodimer. The cofactor is Mg(2+).

Its subcellular location is the cytoplasm. It catalyses the reaction IMP + L-aspartate + GTP = N(6)-(1,2-dicarboxyethyl)-AMP + GDP + phosphate + 2 H(+). The protein operates within purine metabolism; AMP biosynthesis via de novo pathway; AMP from IMP: step 1/2. Functionally, plays an important role in the de novo pathway of purine nucleotide biosynthesis. Catalyzes the first committed step in the biosynthesis of AMP from IMP. The chain is Adenylosuccinate synthetase from Salmonella typhi.